Here is a 294-residue protein sequence, read N- to C-terminus: Probable ABC transporter permease protein YqgI (294 aa).

6 helical membrane-spanning segments follow: residues 14–34 (FGLCAAIIAAILVGLFSYIII), 66–86 (FYILFITMLITIPLGVGGGVF), 99–121 (FIRTCIEVLSSLPSIVIGMFGLL), 126–148 (LTGWGYTIIGGALALTVFNLPVM), 190–210 (IITGAILASGRVFGEAAALLF), and 260–280 (AIANGGSAVLVISVLVFNLAA). Positions 62-280 (LFNSFYILFI…ISVLVFNLAA (219 aa)) constitute an ABC transmembrane type-1 domain.

This sequence belongs to the binding-protein-dependent transport system permease family. CysTW subfamily.

It localises to the cell membrane. Its function is as follows. Part of the binding-protein-dependent transport system YqgGHIJK. Probably responsible for the translocation of the substrate across the membrane. The chain is Probable ABC transporter permease protein YqgI (yqgI) from Bacillus subtilis (strain 168).